The primary structure comprises 438 residues: V-type ATP synthase beta chain (438 aa).

Belongs to the ATPase alpha/beta chains family.

In terms of biological role, produces ATP from ADP in the presence of a proton gradient across the membrane. The V-type beta chain is a regulatory subunit. This is V-type ATP synthase beta chain from Chlamydia trachomatis serovar A (strain ATCC VR-571B / DSM 19440 / HAR-13).